We begin with the raw amino-acid sequence, 847 residues long: Capsid-associated protein AC83 (847 aa).

The N-terminal stretch at 1–19 (MMSGVMLLMLAIFLIIAFT) is a signal peptide. The segment at 148–197 (CVPVPPCDNKSAGLYPMDERLLDTLVLNQHLDKDYSTNAHLYHPTFYLRC) adopts a C2HC BV-type zinc-finger fold. Residues asparagine 156 and asparagine 211 are each glycosylated (N-linked (GlcNAc...) asparagine; by host). Disulfide bonds link cysteine 208–cysteine 221 and cysteine 261–cysteine 274. The Chitin-binding type-2 domain maps to 224–282 (NELCENRPDGYILSYFPSNLLVNQFMQCVNGRHVVGECPANKIFDRNLMSCVEAHPCAF). 6 N-linked (GlcNAc...) asparagine; by host glycosylation sites follow: asparagine 306, asparagine 337, asparagine 500, asparagine 592, asparagine 613, and asparagine 639. The interval 665 to 698 (DHWVVAPPTAPPPPPEPEPEPEPEPEPEPELPSP) is disordered. Positions 681-693 (PEPEPEPEPEPEP) are enriched in acidic residues.

It localises to the virion. Plays an essential role in nucleocapsid assembly. Essential for the establishment of efficient per os infection. In Autographa californica nuclear polyhedrosis virus (AcMNPV), this protein is Capsid-associated protein AC83 (p95).